A 991-amino-acid chain; its full sequence is Collagenase ColT (991 aa).

Positions 1–28 are cleaved as a signal peptide; it reads MKKKFIKMLCSIAIGCMISTSYSIKVSA. The propeptide occupies 29–52; sequence FSNGNTKTNPNGEFKSLSLNSTNP. The interval 53–727 is S1 metalloprotease domain, degrades FALGPA (furylacryloyl-Leu-Gly-Pro-Ala); the sequence is YKTKYSFNDL…VYDIVFHGLL (675 aa). The segment at 57–330 is activator domain; that stretch reads YSFNDLNKLS…AIEAIKEDFN (274 aa). Residues 340-611 form a catalytic subdomain region; that stretch reads DINKLIEEGK…MENLVNNYDN (272 aa). Glu-440 lines the Ca(2+) pocket. His-465 is a binding site for Zn(2+). Residue Glu-466 is part of the active site. A Zn(2+)-binding site is contributed by His-469. Residues Gly-473, Ile-477, and Gly-479 each coordinate Ca(2+). Position 499 (Glu-499) interacts with Zn(2+). Residues 619-731 form a helper subdomain region; that stretch reads DDYMKQYDNK…VFHGLLSHNK (113 aa). Collagen-binding domain stretches follow at residues 755–870 and 878–991; these read IYEK…NISD and IKKI…VIIN. Glu-757, Glu-759, Asn-761, Asp-784, Asp-787, Glu-883, Glu-885, Asn-887, Asp-888, Asp-910, and Asp-913 together coordinate Ca(2+).

This sequence belongs to the peptidase M9B family. Collagenase subfamily. Requires Ca(2+) as cofactor. The cofactor is Zn(2+).

It localises to the secreted. The catalysed reaction is Digestion of native collagen in the triple helical region at Xaa-|-Gly bonds. With synthetic peptides, a preference is shown for Gly at P3 and P1', Pro and Ala at P2 and P2', and hydroxyproline, Ala or Arg at P3'.. With respect to regulation, partially inhibited by 1-10-phenanthroline; inactivation is irreversible. Partially inhibited by EDTA; inactivation is reversible. Inhibited by broad-spectrum zinc metalloprotease inhibitor batimastat. N-aryl mercaptoacetamide-based inhibitors have been isolated that act on clostridial collagenases with submicromolar affinity while having negligibile activity on human collagenases. Functionally, clostridial collagenases are among the most efficient degraders of eukaryotic collagen known; saprophytes use collagen as a carbon source while pathogens additionally digest collagen to aid in host colonization. Has both tripeptidylcarboxypeptidase on Gly-X-Y and endopeptidase activities; the endopeptidase cuts within the triple helix region of collagen while tripeptidylcarboxypeptidase successively digests the exposed ends, thus clostridial collagenases can digest large sections of collagen. The activator domain (residues 57-330) and catalytic subdomain (340-611) open and close around substrate allowing digestion when the protein is closed. This is Collagenase ColT from Clostridium tetani (strain Massachusetts / E88).